The chain runs to 292 residues: 4-hydroxy-tetrahydrodipicolinate synthase (292 aa).

T45 lines the pyruvate pocket. Catalysis depends on Y133, which acts as the Proton donor/acceptor. Residue K161 is the Schiff-base intermediate with substrate of the active site. I203 contacts pyruvate.

This sequence belongs to the DapA family. In terms of assembly, homotetramer; dimer of dimers.

The protein resides in the cytoplasm. It carries out the reaction L-aspartate 4-semialdehyde + pyruvate = (2S,4S)-4-hydroxy-2,3,4,5-tetrahydrodipicolinate + H2O + H(+). It participates in amino-acid biosynthesis; L-lysine biosynthesis via DAP pathway; (S)-tetrahydrodipicolinate from L-aspartate: step 3/4. Catalyzes the condensation of (S)-aspartate-beta-semialdehyde [(S)-ASA] and pyruvate to 4-hydroxy-tetrahydrodipicolinate (HTPA). In Azoarcus sp. (strain BH72), this protein is 4-hydroxy-tetrahydrodipicolinate synthase.